A 602-amino-acid polypeptide reads, in one-letter code: Aspartate--tRNA(Asp/Asn) ligase (602 aa).

E175 serves as a coordination point for L-aspartate. An aspartate region spans residues 199–202 (QIFK). R221 is an L-aspartate binding site. ATP is bound by residues 221–223 (RDE) and Q230. H458 is a binding site for L-aspartate. E492 lines the ATP pocket. R499 provides a ligand contact to L-aspartate. 544–547 (GLDR) is an ATP binding site.

The protein belongs to the class-II aminoacyl-tRNA synthetase family. Type 1 subfamily. Homodimer.

The protein resides in the cytoplasm. The catalysed reaction is tRNA(Asx) + L-aspartate + ATP = L-aspartyl-tRNA(Asx) + AMP + diphosphate. Aspartyl-tRNA synthetase with relaxed tRNA specificity since it is able to aspartylate not only its cognate tRNA(Asp) but also tRNA(Asn). Reaction proceeds in two steps: L-aspartate is first activated by ATP to form Asp-AMP and then transferred to the acceptor end of tRNA(Asp/Asn). The sequence is that of Aspartate--tRNA(Asp/Asn) ligase from Cupriavidus necator (strain ATCC 17699 / DSM 428 / KCTC 22496 / NCIMB 10442 / H16 / Stanier 337) (Ralstonia eutropha).